Consider the following 377-residue polypeptide: Putative F-box protein At3g13830 (377 aa).

The 47-residue stretch at 6–52 (TTTMSTLPMVLVDEILSRVPITSLRSLRSTCKRWEAQSKTNLVGGKA) folds into the F-box domain.

The sequence is that of Putative F-box protein At3g13830 from Arabidopsis thaliana (Mouse-ear cress).